We begin with the raw amino-acid sequence, 43 residues long: Defensin (43 aa).

Cystine bridges form between cysteine 3–cysteine 34, cysteine 20–cysteine 39, and cysteine 24–cysteine 41.

The protein localises to the secreted. In terms of biological role, antibacterial peptide active against Gram-positive and Gram-negative bacteria. In Palomena prasina (Green shield bug), this protein is Defensin.